Here is a 289-residue protein sequence, read N- to C-terminus: MIIVDRISEMQALMRQYHREGKTIGFVPTMGYLHEGHAALIDRARQENDIVVLSVFVNPLQFGPNEDFARYPRDFERDRHIAEQHGVDVLFHPEAGEMYPGPLTVQVVVKARTDVLCGRSRPGHFDGVATVLTKLFHIVMPDRAYFGLKDAQQVAVVDGLIRDFNFPIELVPVPTVREADGLAKSSRNVYLSPQEREEAPALYQALRAAAAAVDGGERSADAIRRLVKEHIEAHTHAEIDYVEVCSYPDLAPLETLHGTVLVAVAVRFASARLIDNIILELPKAHRQED.

Residue 30-37 (MGYLHEGH) participates in ATP binding. The active-site Proton donor is the His37. Residue Gln61 coordinates (R)-pantoate. Beta-alanine is bound at residue Gln61. 147–150 (GLKD) contacts ATP. Position 153 (Gln153) interacts with (R)-pantoate. ATP-binding positions include Val176 and 184–187 (KSSR).

Belongs to the pantothenate synthetase family. Homodimer.

The protein resides in the cytoplasm. It carries out the reaction (R)-pantoate + beta-alanine + ATP = (R)-pantothenate + AMP + diphosphate + H(+). It participates in cofactor biosynthesis; (R)-pantothenate biosynthesis; (R)-pantothenate from (R)-pantoate and beta-alanine: step 1/1. In terms of biological role, catalyzes the condensation of pantoate with beta-alanine in an ATP-dependent reaction via a pantoyl-adenylate intermediate. This is Pantothenate synthetase from Geobacillus thermodenitrificans (strain NG80-2).